The following is a 434-amino-acid chain: Flagellum-specific ATP synthase (434 aa).

164 to 171 (AGSGVGKS) provides a ligand contact to ATP.

This sequence belongs to the ATPase alpha/beta chains family.

The protein resides in the cytoplasm. The catalysed reaction is ATP + H2O + 4 H(+)(in) = ADP + phosphate + 5 H(+)(out). Functionally, probable catalytic subunit of a protein translocase for flagellum-specific export, or a proton translocase involved in local circuits at the flagellum. The sequence is that of Flagellum-specific ATP synthase (fliI) from Helicobacter pylori (strain ATCC 700392 / 26695) (Campylobacter pylori).